The chain runs to 365 residues: 3-dehydroquinate synthase (365 aa).

Residues 106 to 110, 130 to 131, Lys-142, Lys-151, and 169 to 172 contribute to the NAD(+) site; these read GVIGD, TT, and FFAT. Zn(2+)-binding residues include Glu-184, His-247, and His-264.

Belongs to the sugar phosphate cyclases superfamily. Dehydroquinate synthase family. Requires Co(2+) as cofactor. It depends on Zn(2+) as a cofactor. NAD(+) is required as a cofactor.

It is found in the cytoplasm. The catalysed reaction is 7-phospho-2-dehydro-3-deoxy-D-arabino-heptonate = 3-dehydroquinate + phosphate. It functions in the pathway metabolic intermediate biosynthesis; chorismate biosynthesis; chorismate from D-erythrose 4-phosphate and phosphoenolpyruvate: step 2/7. Functionally, catalyzes the conversion of 3-deoxy-D-arabino-heptulosonate 7-phosphate (DAHP) to dehydroquinate (DHQ). This chain is 3-dehydroquinate synthase, found in Listeria welshimeri serovar 6b (strain ATCC 35897 / DSM 20650 / CCUG 15529 / CIP 8149 / NCTC 11857 / SLCC 5334 / V8).